Reading from the N-terminus, the 219-residue chain is MTSNVQLSETNSPRNQKTRPRAEKEEVDYMQRAQWLRAALLGANDGLVTVASLMMGVGSIKEDVKAMLLVGFAGLVAGACSMAIGEFVSVCTQRDIETAQMKRAIEHKTSLSAIDEQEEEEKKERLPNPGQAAIASALAFSVGAAMPLLGAVFIENHKVRMVVVAVVATIALVVFGVTGAVLGKTSVVKSSVRVVIGGWMAMALTFGLTKFIGSAAMQI.

The span at 1 to 15 (MTSNVQLSETNSPRN) shows a compositional bias: polar residues. The disordered stretch occupies residues 1-26 (MTSNVQLSETNSPRNQKTRPRAEKEE). T2 carries the N-acetylthreonine modification. At 2 to 37 (TSNVQLSETNSPRNQKTRPRAEKEEVDYMQRAQWLR) the chain is on the cytoplasmic side. Residues 38-58 (AALLGANDGLVTVASLMMGVG) form a helical membrane-spanning segment. At 59-67 (SIKEDVKAM) the chain is on the vacuolar side. Residues 68–88 (LLVGFAGLVAGACSMAIGEFV) traverse the membrane as a helical segment. Over 89-133 (SVCTQRDIETAQMKRAIEHKTSLSAIDEQEEEEKKERLPNPGQAA) the chain is Cytoplasmic. A helical membrane pass occupies residues 134–154 (IASALAFSVGAAMPLLGAVFI). Residues 155 to 161 (ENHKVRM) lie on the Vacuolar side of the membrane. Residues 162-182 (VVVAVVATIALVVFGVTGAVL) traverse the membrane as a helical segment. The Cytoplasmic portion of the chain corresponds to 183–193 (GKTSVVKSSVR). Residues 194–214 (VVIGGWMAMALTFGLTKFIGS) traverse the membrane as a helical segment. The Vacuolar segment spans residues 215 to 219 (AAMQI).

Belongs to the CCC1 family. As to expression, highly expressed in roots. inflorescences and at lower levels in leaves.

It is found in the vacuole membrane. The enzyme catalyses Fe(2+)(in) = Fe(2+)(out). Functionally, vacuolar iron transporter involved in the transfer of iron ions from the cytosol to the vacuole for intracellular iron storage. Involved in regulation of cellular iron homeostasis. Vacuolar iron storage is required for seed embryo and seedling development. The sequence is that of Vacuolar iron transporter homolog 2.1 from Arabidopsis thaliana (Mouse-ear cress).